A 584-amino-acid chain; its full sequence is Aspartate--tRNA(Asp/Asn) ligase (584 aa).

Residue glutamate 177 coordinates L-aspartate. Residues 201–204 form an aspartate region; sequence QLFK. Arginine 223 serves as a coordination point for L-aspartate. ATP-binding positions include 223–225 and glutamine 232; that span reads RDE. An L-aspartate-binding site is contributed by histidine 447. Glutamate 481 lines the ATP pocket. Arginine 488 serves as a coordination point for L-aspartate. 533–536 lines the ATP pocket; it reads GLDR.

Belongs to the class-II aminoacyl-tRNA synthetase family. Type 1 subfamily. As to quaternary structure, homodimer.

It is found in the cytoplasm. It catalyses the reaction tRNA(Asx) + L-aspartate + ATP = L-aspartyl-tRNA(Asx) + AMP + diphosphate. Its function is as follows. Aspartyl-tRNA synthetase with relaxed tRNA specificity since it is able to aspartylate not only its cognate tRNA(Asp) but also tRNA(Asn). Reaction proceeds in two steps: L-aspartate is first activated by ATP to form Asp-AMP and then transferred to the acceptor end of tRNA(Asp/Asn). This Chlamydia pneumoniae (Chlamydophila pneumoniae) protein is Aspartate--tRNA(Asp/Asn) ligase.